Here is a 355-residue protein sequence, read N- to C-terminus: Phenylalanine--tRNA ligase alpha subunit (355 aa).

Glu-273 contacts Mg(2+).

This sequence belongs to the class-II aminoacyl-tRNA synthetase family. Phe-tRNA synthetase alpha subunit type 1 subfamily. In terms of assembly, tetramer of two alpha and two beta subunits. It depends on Mg(2+) as a cofactor.

Its subcellular location is the cytoplasm. The catalysed reaction is tRNA(Phe) + L-phenylalanine + ATP = L-phenylalanyl-tRNA(Phe) + AMP + diphosphate + H(+). The sequence is that of Phenylalanine--tRNA ligase alpha subunit from Bifidobacterium animalis subsp. lactis (strain AD011).